Consider the following 628-residue polypeptide: NUAK family SNF1-like kinase 2 (628 aa).

Met-1 is subject to N-acetylmethionine. The Protein kinase domain maps to 53 to 303 (YEFLETLGKG…LEDVASHWWV (251 aa)). Residues 59–67 (LGKGTYGKV) and Lys-81 each bind ATP. The Proton acceptor role is filled by Asp-175. Phosphothreonine; by LKB1 is present on Thr-208. A disordered region spans residues 355–493 (KQHAPGGGST…KEQKPPQASG (139 aa)). Ser-435 carries the phosphoserine modification. The segment covering 457–469 (SGYYSSPEPSESG) has biased composition (low complexity). A phosphoserine mark is found at Ser-523, Ser-544, Ser-547, and Ser-573. A disordered region spans residues 531–562 (RPLARASRPSGAVSEDSILSSESFDQLDLPER).

The protein belongs to the protein kinase superfamily. CAMK Ser/Thr protein kinase family. SNF1 subfamily. Requires Mg(2+) as cofactor. In terms of processing, phosphorylated at Thr-208 by STK11/LKB1 in complex with STE20-related adapter-alpha (STRADA) pseudo kinase and CAB39. Autophosphorylation is also possible at Thr-208.

It catalyses the reaction L-seryl-[protein] + ATP = O-phospho-L-seryl-[protein] + ADP + H(+). The enzyme catalyses L-threonyl-[protein] + ATP = O-phospho-L-threonyl-[protein] + ADP + H(+). With respect to regulation, activated by phosphorylation on Thr-208. Its function is as follows. Stress-activated kinase involved in tolerance to glucose starvation. Induces cell-cell detachment by increasing F-actin conversion to G-actin. Expression is induced by CD95 or TNF-alpha, via NF-kappa-B. Protects cells from CD95-mediated apoptosis and is required for the increased motility and invasiveness of CD95-activated tumor cells. Phosphorylates LATS1 and LATS2. Plays a key role in neural tube closure during embryonic development through LATS2 phosphorylation and regulation of the nuclear localization of YAP1 a critical downstream regulatory target in the Hippo signaling pathway. This Homo sapiens (Human) protein is NUAK family SNF1-like kinase 2.